The chain runs to 650 residues: MICOS complex subunit MIC60, mitochondrial (650 aa).

Residues 1 to 34 constitute a mitochondrion transit peptide; sequence MLRKSVLELSSRLSIKRFPRNLGAQRFHLSSSRN. The interval 26–74 is disordered; it reads RFHLSSSRNASTSGKNGLPGAKPVGKPDASKVDPPKVTPPPPTKGNSSK. Polar residues predominate over residues 28-40; sequence HLSSSRNASTSGK. Residues 35 to 74 are Mitochondrial matrix-facing; sequence ASTSGKNGLPGAKPVGKPDASKVDPPKVTPPPPTKGNSSK. The helical transmembrane segment at 75 to 95 threads the bilayer; it reads VVIGGVAIAGAFLVAYQTGYL. Topologically, residues 96-549 are mitochondrial intermembrane; sequence DQYLGKEQQK…FDTLKGTLRH (454 aa). Disordered regions lie at residues 121–168, 239–267, and 284–304; these read EAHH…ESDL, QSSS…EDGI, and EGSD…TKET. Over residues 284–299 the composition is skewed to low complexity; that stretch reads EGSDTESTGSSSIGEQ. Coiled coils occupy residues 345-369 and 396-430; these read AQVF…LRAR and KAIQ…LAKA. Residues 550-570 traverse the membrane as a helical segment; sequence FSLIPPGGGGILAHSLAHVAS. The Mitochondrial matrix portion of the chain corresponds to 571–650; the sequence is SLKFKEVDQA…QSYATCVSLT (80 aa).

It belongs to the MICOS complex subunit Mic60 family. Component of the mitochondrial contact site and cristae organizing system (MICOS) complex. The MICOS complex associates with mitochondrial outer membrane proteins. Present in a large lipid-enriched complex called mitochondrial transmembrane lipoprotein (MTL) complex made of proteins located in the two mitochondrial membranes, including the TOM complex and the core components of the MICOS complex and containing at least digalactosyldiacylglycerol (DGDG). Binds to TOM40-1. Component of a mitochondrial large protein complex that contains, at least, MIC60, DGS1, TOM40, TOM20 proteins, and petC/RISP.

The protein resides in the mitochondrion inner membrane. Component of the MICOS complex, a large protein complex of the mitochondrial inner membrane that plays crucial roles in the maintenance of crista junctions, inner membrane architecture, and formation of contact sites to the outer membrane. Plays a role in keeping cristae membranes connected to the inner boundary membrane. Also promotes protein import via the mitochondrial intermembrane space assembly (MIA) pathway. Involved in the maintenance of mitochondria morphology. Binds to glycerolipids such as cardiolipin (CL). Contributes to the export of phosphatidylethanolamine (PE) from mitochondria and to the import of galactoglycerolipids from plastids during phosphate (Pi) starvation. Promotes lipid desorption from membranes, likely as an initial step for lipid transfer, and regulates probably the tethering between the inner and outer membranes of mitochondria by binding to TOM40 proteins. The chain is MICOS complex subunit MIC60, mitochondrial from Arabidopsis thaliana (Mouse-ear cress).